Reading from the N-terminus, the 137-residue chain is Small ribosomal subunit protein uS12 (137 aa).

The disordered stretch occupies residues 1–57; it reads MPTINQLVRKPRKSKVEKPKSPALNVGYNSHKKVQTNVSSPQKRGVATRVGTMTPRK. A 3-methylthioaspartic acid modification is found at aspartate 102.

This sequence belongs to the universal ribosomal protein uS12 family. Part of the 30S ribosomal subunit. Contacts proteins S8 and S17. May interact with IF1 in the 30S initiation complex.

In terms of biological role, with S4 and S5 plays an important role in translational accuracy. Interacts with and stabilizes bases of the 16S rRNA that are involved in tRNA selection in the A site and with the mRNA backbone. Located at the interface of the 30S and 50S subunits, it traverses the body of the 30S subunit contacting proteins on the other side and probably holding the rRNA structure together. The combined cluster of proteins S8, S12 and S17 appears to hold together the shoulder and platform of the 30S subunit. This is Small ribosomal subunit protein uS12 from Streptococcus pneumoniae (strain Hungary19A-6).